A 497-amino-acid polypeptide reads, in one-letter code: MTKHIIVIGGGLGGISAAIRMAQSGYSVSLYEQNNHIGGKVNRHESDGFGFDLGPSILTMPYIFEKLFEYSKKQMSDYVTIKRLPHQWRSFFPDGTTIDLYEGIKETGQHNAILSKQDIEELQNYLNYTRRIDRITEKGYFNYGLDTLSQIIKFHGPLNALINYDYVHTMQQAIDKRISNPYLRQMLGYFIKYVGSSSYDAPAVLSMLFHMQQEQGLWYVEGGIHHLANALEKLAREEGVTIHTGARVDNIKTYQRRVTGVRLDTGEFVKADYIISNMEVIPTYKYLIHLDTQRLNKLEREFEPASSGYVMHLGVACQYPQLAHHNFFFTENAYLNYQQVFHEKVLPDDPTIYLVNTNKTDHTQAPVGYENIKVLPHIPYIQDQPFTTEDYAKFRDKILDKLEKMGLTDLRKHIIYEDVWTPEDIEKNYRSNRGAIYGVVADKKKNKGFKFPKESQYFENLYFVGGSVNPGGGIPMVTLSGQQVADKINAREAKNRK.

An FAD-binding site is contributed by 7 to 19 (VIGGGLGGISAAI).

It belongs to the carotenoid/retinoid oxidoreductase family. CrtP subfamily. FAD is required as a cofactor.

The enzyme catalyses all-trans-4,4'-diaponeurosporene + 2 AH2 + 2 O2 = 4,4'-diaponeurosporenal + 2 A + 3 H2O. Its pathway is carotenoid biosynthesis; staphyloxanthin biosynthesis; staphyloxanthin from farnesyl diphosphate: step 3/5. Involved in the biosynthesis of the yellow-orange carotenoid staphyloxanthin, which plays a role in the virulence via its protective function against oxidative stress. Catalyzes the oxidation of the terminal methyl side group of 4,4'-diaponeurosporene to form 4,4'-diaponeurosporen-4-al. The protein is 4,4'-diaponeurosporene oxygenase of Staphylococcus aureus (strain MSSA476).